Consider the following 269-residue polypeptide: E3 ubiquitin-protein ligase complex slx8-rfp subunit slx8 (269 aa).

Residues 1 to 10 (MPPAHKRDTN) are compositionally biased toward basic and acidic residues. Disordered regions lie at residues 1–75 (MPPA…LNRA) and 166–196 (PRKQ…QVVP). Residues 60–70 (PSGTTSENESL) show a composition bias toward polar residues. An RING-type zinc finger spans residues 206–247 (CVICLDSPENLSCTPCGHIFCNFCILSALGTTAATQKCPVCR).

As to quaternary structure, part of an E3 ubiquitin complex including rfp1, rfp2 and slx8. Interacts with rfp1 and rfp2.

It is found in the nucleus. It carries out the reaction S-ubiquitinyl-[E2 ubiquitin-conjugating enzyme]-L-cysteine + [acceptor protein]-L-lysine = [E2 ubiquitin-conjugating enzyme]-L-cysteine + N(6)-ubiquitinyl-[acceptor protein]-L-lysine.. It functions in the pathway protein modification; protein ubiquitination. In terms of biological role, mediates ubiquitination and subsequent desumoylation/degradation of sumoylated proteins and proteins containing SUMO-like domains. Acts as a critical suppressor of gross chromosomal rearrangements (GCRs) during normal cell cycle progression. Involved in stabilizing, restarting or resolving transiently stalled replication forks. Prevents accumulation of DNA damage during cell cycle progression. This is E3 ubiquitin-protein ligase complex slx8-rfp subunit slx8 (slx8) from Schizosaccharomyces pombe (strain 972 / ATCC 24843) (Fission yeast).